The following is a 423-amino-acid chain: UDP-N-acetylglucosamine 1-carboxyvinyltransferase 2 (423 aa).

Residue 23–24 (KN) participates in phosphoenolpyruvate binding. Arg93 contributes to the UDP-N-acetyl-alpha-D-glucosamine binding site. Cys117 acts as the Proton donor in catalysis. 2-(S-cysteinyl)pyruvic acid O-phosphothioketal is present on Cys117. UDP-N-acetyl-alpha-D-glucosamine is bound by residues 122-126 (RPIDQ), Asp305, and Ile327.

Belongs to the EPSP synthase family. MurA subfamily.

The protein resides in the cytoplasm. The catalysed reaction is phosphoenolpyruvate + UDP-N-acetyl-alpha-D-glucosamine = UDP-N-acetyl-3-O-(1-carboxyvinyl)-alpha-D-glucosamine + phosphate. Its pathway is cell wall biogenesis; peptidoglycan biosynthesis. Cell wall formation. Adds enolpyruvyl to UDP-N-acetylglucosamine. This is UDP-N-acetylglucosamine 1-carboxyvinyltransferase 2 from Listeria monocytogenes serotype 4b (strain F2365).